A 140-amino-acid chain; its full sequence is Organic hydroperoxide resistance protein-like (140 aa).

This sequence belongs to the OsmC/Ohr family.

The polypeptide is Organic hydroperoxide resistance protein-like (Staphylococcus aureus (strain MRSA252)).